We begin with the raw amino-acid sequence, 46 residues long: Esculentin-1a/b (46 aa).

A disulfide bridge links Cys-40 with Cys-46.

It belongs to the frog skin active peptide (FSAP) family. Esculentin subfamily. In terms of tissue distribution, expressed by the skin glands.

It localises to the secreted. In terms of biological role, antimicrobial peptide. Stimulates insulin secretion by BRIN-BD11 cells in vitro. Shows hemolytic activity. This is Esculentin-1a/b from Pelophylax ridibundus (Marsh frog).